The primary structure comprises 100 residues: MAYYLYMLRCEDGSIYTGVAKDYLKRYEEHLSAKGAKYTKSHKVVKIERVFLCDSRSIACSLESEIKKYIKKKKENIISKPDSFIKDIENVRKIKIKKIF.

The 77-residue stretch at 1–77 (MAYYLYMLRC…KYIKKKKENI (77 aa)) folds into the GIY-YIG domain.

The protein belongs to the UPF0213 family.

The protein is UPF0213 protein FN1575 of Fusobacterium nucleatum subsp. nucleatum (strain ATCC 25586 / DSM 15643 / BCRC 10681 / CIP 101130 / JCM 8532 / KCTC 2640 / LMG 13131 / VPI 4355).